The following is a 280-amino-acid chain: MQEDIPNILYVSREEDGRIVEMIVTEKHKEKYVYYPYSNKSTFTIEDTKLFNIANFSLIIQWITYTLFYSQAVIIFILYCWALNPYRSPGNSVLGGLGQRVPRTVVHINPHNIFEGCDKSIICKLRLPMPIINTTHGKIYPNFTKTGGSSANYKLALERLVGLMNNQQCNVEIISQKKTVFSSQNVTFFENVKSDAILALLVLQKNCHPESVEIVKSKIKLENYGVNYRQHMPQYFTVCNASWADVINNTNYNFKTSDRPCNTNYLLRYPQHVPYIINVK.

It belongs to the herpesviridae BDLF2 family.

This is an uncharacterized protein from Saimiri sciureus (Common squirrel monkey).